The sequence spans 448 residues: Tubulin beta chain (448 aa).

Residues Q11, E69, S138, G142, T143, G144, N204, and N226 each contribute to the GTP site. Mg(2+) is bound at residue E69. Residues 425–448 (YQDASISEGEEEYLEEEEPLEHEE) form a disordered region. Acidic residues predominate over residues 432 to 448 (EGEEEYLEEEEPLEHEE).

It belongs to the tubulin family. In terms of assembly, dimer of alpha and beta chains. A typical microtubule is a hollow water-filled tube with an outer diameter of 25 nm and an inner diameter of 15 nM. Alpha-beta heterodimers associate head-to-tail to form protofilaments running lengthwise along the microtubule wall with the beta-tubulin subunit facing the microtubule plus end conferring a structural polarity. Microtubules usually have 13 protofilaments but different protofilament numbers can be found in some organisms and specialized cells. Mg(2+) is required as a cofactor.

It localises to the cytoplasm. Its subcellular location is the cytoskeleton. Tubulin is the major constituent of microtubules, a cylinder consisting of laterally associated linear protofilaments composed of alpha- and beta-tubulin heterodimers. Microtubules grow by the addition of GTP-tubulin dimers to the microtubule end, where a stabilizing cap forms. Below the cap, tubulin dimers are in GDP-bound state, owing to GTPase activity of alpha-tubulin. The protein is Tubulin beta chain (benR) of Aspergillus parasiticus.